A 514-amino-acid chain; its full sequence is 2,3-bisphosphoglycerate-independent phosphoglycerate mutase (514 aa).

Positions 14 and 64 each coordinate Mn(2+). The Phosphoserine intermediate role is filled by S64. Substrate is bound by residues H125, 155 to 156 (RD), R187, R193, 263 to 266 (RADR), and K336. Mn(2+) contacts are provided by D403, H407, D444, H445, and H463.

This sequence belongs to the BPG-independent phosphoglycerate mutase family. In terms of assembly, monomer. It depends on Mn(2+) as a cofactor.

The enzyme catalyses (2R)-2-phosphoglycerate = (2R)-3-phosphoglycerate. It functions in the pathway carbohydrate degradation; glycolysis; pyruvate from D-glyceraldehyde 3-phosphate: step 3/5. With respect to regulation, insensitive to vanadate. In terms of biological role, catalyzes the interconversion of 2-phosphoglycerate (2-PGA) and 3-phosphoglycerate (3-PGA). The polypeptide is 2,3-bisphosphoglycerate-independent phosphoglycerate mutase (Escherichia coli (strain K12)).